An 87-amino-acid chain; its full sequence is Potassium channel toxin Ttr-beta-KTx (87 aa).

Positions 1-19 (MERKWALLLFLGMVTLVSC) are cleaved as a signal peptide. Positions 20-27 (GLREKHVQ) are excised as a propeptide. One can recognise a BetaSPN-type CS-alpha/beta domain in the interval 53–87 (QFGCPAYEGYCNNHCQDIKRKDGECHGFKCKCAKD). 3 cysteine pairs are disulfide-bonded: Cys-56-Cys-77, Cys-63-Cys-82, and Cys-67-Cys-84.

This sequence belongs to the long chain scorpion toxin family. Class 1 subfamily. As to expression, expressed by the venom gland.

The protein resides in the secreted. Functionally, inhibits voltage-gated potassium channel. The polypeptide is Potassium channel toxin Ttr-beta-KTx (Tityus trivittatus (Argentinean scorpion)).